The primary structure comprises 256 residues: DNA repair protein RecO (256 aa).

This sequence belongs to the RecO family.

Involved in DNA repair and RecF pathway recombination. The chain is DNA repair protein RecO from Rhizobium etli (strain ATCC 51251 / DSM 11541 / JCM 21823 / NBRC 15573 / CFN 42).